The chain runs to 879 residues: MKMLTRLQILMLALFSKGFLLSLGDHNFMRREIKIEGDLVLGGLFPINEKGTGTEECGRINEDRGIQRLEAMLFAIDEINKDNYLLPGVKLGVHILDTCSRDTYALEQSLEFVRASLTKVDEAEYMCPDGSYAIQENIPLLIAGVIGGSYSSVSIQVANLLRLFQIPQISYASTSAKLSDKSRYDYFARTVPPDFYQAKAMAEILRFFNWTYVSTVASEGDYGETGIEAFEQEARLRNICIATAEKVGRSNIRKSYDSVIRELLQKPNARVVVLFMRSDDSRELIAAANRVNASFTWVASDGWGAQESIVKGSEHVAYGAITLELASHPVRQFDRYFQSLNPYNNHRNPWFRDFWEQKFQCSLQNKRNHRQVCDKHLAIDSSNYEQESKIMFVVNAVYAMAHALHKMQRTLCPNTTKLCDAMKILDGKKLYKEYLLKINFTAPFNPNKGADSIVKFDTFGDGMGRYNVFNLQQTGGKYSYLKVGHWAETLSLDVDSIHWSRNSVPTSQCSDPCAPNEMKNMQPGDVCCWICIPCEPYEYLVDEFTCMDCGPGQWPTADLSGCYNLPEDYIKWEDAWAIGPVTIACLGFLCTCIVITVFIKHNNTPLVKASGRELCYILLFGVSLSYCMTFFFIAKPSPVICALRRLGLGTSFAICYSALLTKTNCIARIFDGVKNGAQRPKFISPSSQVFICLGLILVQIVMVSVWLILETPGTRRYTLPEKRETVILKCNVKDSSMLISLTYDVVLVILCTVYAFKTRKCPENFNEAKFIGFTMYTTCIIWLAFLPIFYVTSSDYRVQTTTMCISVSLSGFVVLGCLFAPKVHIVLFQPQKNVVTHRLHLNRFSVSGTATTYSQSSASTYVPTVCNGREVLDSTTSSL.

A signal peptide spans 1–22 (MKMLTRLQILMLALFSKGFLLS). Topologically, residues 23–576 (LGDHNFMRRE…EDYIKWEDAW (554 aa)) are extracellular. Cys-57 and Cys-99 are joined by a disulfide. Residues Arg-68, Ser-151, and 172–174 (AST) contribute to the L-glutamate site. Asn-209 carries N-linked (GlcNAc...) asparagine glycosylation. L-glutamate is bound at residue Tyr-222. 7 disulfides stabilise this stretch: Cys-240–Cys-527, Cys-361–Cys-373, Cys-412–Cys-419, Cys-509–Cys-528, Cys-513–Cys-531, Cys-534–Cys-546, and Cys-549–Cys-562. Asn-292 carries an N-linked (GlcNAc...) asparagine glycan. Asp-301 lines the L-glutamate pocket. An L-glutamate-binding site is contributed by Lys-389. N-linked (GlcNAc...) asparagine glycans are attached at residues Asn-414 and Asn-439. The helical transmembrane segment at 577–599 (AIGPVTIACLGFLCTCIVITVFI) threads the bilayer. At 600-613 (KHNNTPLVKASGRE) the chain is on the cytoplasmic side. The helical transmembrane segment at 614–634 (LCYILLFGVSLSYCMTFFFIA) threads the bilayer. Over 635–645 (KPSPVICALRR) the chain is Extracellular. The helical transmembrane segment at 646-664 (LGLGTSFAICYSALLTKTN) threads the bilayer. Topologically, residues 665–688 (CIARIFDGVKNGAQRPKFISPSSQ) are cytoplasmic. A helical membrane pass occupies residues 689–709 (VFICLGLILVQIVMVSVWLIL). Residues 710–734 (ETPGTRRYTLPEKRETVILKCNVKD) lie on the Extracellular side of the membrane. A helical transmembrane segment spans residues 735–756 (SSMLISLTYDVVLVILCTVYAF). The Cytoplasmic portion of the chain corresponds to 757 to 769 (KTRKCPENFNEAK). The chain crosses the membrane as a helical span at residues 770–792 (FIGFTMYTTCIIWLAFLPIFYVT). The Extracellular segment spans residues 793–802 (SSDYRVQTTT). A helical membrane pass occupies residues 803-828 (MCISVSLSGFVVLGCLFAPKVHIVLF). At 829-879 (QPQKNVVTHRLHLNRFSVSGTATTYSQSSASTYVPTVCNGREVLDSTTSSL) the chain is on the cytoplasmic side.

Belongs to the G-protein coupled receptor 3 family. Interacts with TAMALIN. As to expression, is widely distributed in the CNS. Predominant expression is seen in the neuronal cells of the cerebral cortex, dentate gyrus, and glial cells throughout brain regions.

The protein resides in the cell membrane. Functionally, G-protein coupled receptor for glutamate. Ligand binding causes a conformation change that triggers signaling via guanine nucleotide-binding proteins (G proteins) and modulates the activity of down-stream effectors. Signaling inhibits adenylate cyclase activity. The polypeptide is Metabotropic glutamate receptor 3 (Grm3) (Rattus norvegicus (Rat)).